A 237-amino-acid chain; its full sequence is Probable 2-phosphosulfolactate phosphatase (237 aa).

It belongs to the ComB family. Mg(2+) serves as cofactor.

The catalysed reaction is (2R)-O-phospho-3-sulfolactate + H2O = (2R)-3-sulfolactate + phosphate. The sequence is that of Probable 2-phosphosulfolactate phosphatase from Thermus thermophilus (strain ATCC 27634 / DSM 579 / HB8).